The following is a 126-amino-acid chain: Large ribosomal subunit protein uL22 (126 aa).

The protein belongs to the universal ribosomal protein uL22 family. As to quaternary structure, part of the 50S ribosomal subunit.

Its function is as follows. This protein binds specifically to 23S rRNA; its binding is stimulated by other ribosomal proteins, e.g. L4, L17, and L20. It is important during the early stages of 50S assembly. It makes multiple contacts with different domains of the 23S rRNA in the assembled 50S subunit and ribosome. The globular domain of the protein is located near the polypeptide exit tunnel on the outside of the subunit, while an extended beta-hairpin is found that lines the wall of the exit tunnel in the center of the 70S ribosome. The chain is Large ribosomal subunit protein uL22 from Jannaschia sp. (strain CCS1).